The chain runs to 1119 residues: Solute carrier family 38 member 10 (1119 aa).

10 helical membrane-spanning segments follow: residues 4-24, 36-58, 84-104, 120-140, 153-173, 229-249, 272-292, 323-343, 345-365, and 378-398; these read AAAS…GVSV, IVLG…MFLV, LVET…YVVI, VGGT…VLPL, FSAM…LSSL, IFAS…FFGY, MLRV…ILPC, ALTL…PNVE, ILGL…PALI, and VVLW…LSVS. Disordered stretches follow at residues 438-691 and 731-1071; these read AEDG…EEAG and KEIH…DGVI. Basic and acidic residues-rich tracts occupy residues 439–454, 466–475, 493–522, 544–559, and 592–603; these read EDGR…REEL, PGREDGKEAP, EAHR…ENKP, DSER…EVGK, and AKEDLGPGDRGL. Serine 612 is subject to Phosphoserine. Residues 652–667 show a composition bias toward pro residues; sequence PPLPAEKPAPGPGLPP. 3 stretches are compositionally biased toward basic and acidic residues: residues 668-677, 731-752, and 763-773; these read EPREQRDVER, KEIH…EVHQ, and EAPEGKARETV. Threonine 772 is modified (phosphothreonine). Serine 802 is modified (phosphoserine). 2 stretches are compositionally biased toward basic and acidic residues: residues 832–841 and 863–876; these read KLRDGQKDAA and PARE…RLAE. Over residues 880–889 the composition is skewed to polar residues; the sequence is GQSQDVTGGS. Phosphoserine is present on residues serine 889, serine 965, and serine 997. Basic and acidic residues-rich tracts occupy residues 975–1005, 1012–1022, and 1033–1042; these read HRLD…RGGE, PRQRPEPELGL, and DNAKPNRDLK.

This sequence belongs to the amino acid/polyamine transporter 2 family.

The protein resides in the membrane. It catalyses the reaction L-glutamate(out) = L-glutamate(in). The enzyme catalyses L-glutamine(out) = L-glutamine(in). The catalysed reaction is L-alanine(in) = L-alanine(out). It carries out the reaction L-serine(in) = L-serine(out). It catalyses the reaction L-leucine(in) = L-leucine(out). In terms of biological role, facilitates bidirectional transport of amino acids. May act as a glutamate sensor that regulates glutamate-glutamine cycle and mTOR signaling in the brain. The transport mechanism remains to be elucidated. The sequence is that of Solute carrier family 38 member 10 from Homo sapiens (Human).